We begin with the raw amino-acid sequence, 255 residues long: Hydroxyacylglutathione hydrolase (255 aa).

7 residues coordinate Zn(2+): His53, His55, Asp57, His58, His111, Asp128, and His166.

It belongs to the metallo-beta-lactamase superfamily. Glyoxalase II family. In terms of assembly, monomer. It depends on Zn(2+) as a cofactor.

The enzyme catalyses an S-(2-hydroxyacyl)glutathione + H2O = a 2-hydroxy carboxylate + glutathione + H(+). Its pathway is secondary metabolite metabolism; methylglyoxal degradation; (R)-lactate from methylglyoxal: step 2/2. Thiolesterase that catalyzes the hydrolysis of S-D-lactoyl-glutathione to form glutathione and D-lactic acid. This chain is Hydroxyacylglutathione hydrolase, found in Nitrosomonas eutropha (strain DSM 101675 / C91 / Nm57).